Consider the following 901-residue polypeptide: Protein translocase subunit SecA (901 aa).

ATP is bound by residues glutamine 87, 105-109 (GEGKT), and aspartate 512. Residues cysteine 885, cysteine 887, cysteine 896, and histidine 897 each coordinate Zn(2+).

Belongs to the SecA family. As to quaternary structure, monomer and homodimer. Part of the essential Sec protein translocation apparatus which comprises SecA, SecYEG and auxiliary proteins SecDF-YajC and YidC. The cofactor is Zn(2+).

The protein localises to the cell inner membrane. Its subcellular location is the cytoplasm. The enzyme catalyses ATP + H2O + cellular proteinSide 1 = ADP + phosphate + cellular proteinSide 2.. Functionally, part of the Sec protein translocase complex. Interacts with the SecYEG preprotein conducting channel. Has a central role in coupling the hydrolysis of ATP to the transfer of proteins into and across the cell membrane, serving both as a receptor for the preprotein-SecB complex and as an ATP-driven molecular motor driving the stepwise translocation of polypeptide chains across the membrane. The chain is Protein translocase subunit SecA from Salmonella typhi.